Consider the following 206-residue polypeptide: Small ribosomal subunit protein uS4 (206 aa).

An S4 RNA-binding domain is found at 96–156 (GRLDNVVYRM…EKAKKQSRVK (61 aa)).

It belongs to the universal ribosomal protein uS4 family. In terms of assembly, part of the 30S ribosomal subunit. Contacts protein S5. The interaction surface between S4 and S5 is involved in control of translational fidelity.

Its function is as follows. One of the primary rRNA binding proteins, it binds directly to 16S rRNA where it nucleates assembly of the body of the 30S subunit. With S5 and S12 plays an important role in translational accuracy. This Salmonella agona (strain SL483) protein is Small ribosomal subunit protein uS4.